The chain runs to 987 residues: UPF0182 protein DIP0733 (987 aa).

Transmembrane regions (helical) follow at residues Leu-19–Leu-39, Ile-63–Phe-83, Phe-115–Trp-135, Ser-176–Ile-196, Tyr-212–Leu-234, Ala-261–Val-281, and Ile-290–Met-310. A compositionally biased stretch (basic and acidic residues) spans Asp-904–Lys-927. A disordered region spans residues Asp-904 to Asn-950. Residues Ala-928–Gly-943 show a composition bias toward low complexity.

Belongs to the UPF0182 family.

It is found in the cell membrane. This Corynebacterium diphtheriae (strain ATCC 700971 / NCTC 13129 / Biotype gravis) protein is UPF0182 protein DIP0733.